A 663-amino-acid polypeptide reads, in one-letter code: Translation factor GUF1, mitochondrial (663 aa).

The N-terminal 37 residues, 1–37, are a transit peptide targeting the mitochondrion; the sequence is MRGCLQSVRLLTTALGQSPRRPLPFAFRLPPNASRLF. Residues 65–245 form the tr-type G domain; the sequence is ERYRNFCIVA…TIVEQIPAPI (181 aa). GTP is bound by residues 74 to 81, 138 to 142, and 192 to 195; these read AHVDHGKS, DTPGH, and NKVD.

It belongs to the TRAFAC class translation factor GTPase superfamily. Classic translation factor GTPase family. LepA subfamily.

The protein localises to the mitochondrion inner membrane. The enzyme catalyses GTP + H2O = GDP + phosphate + H(+). Functionally, promotes mitochondrial protein synthesis. May act as a fidelity factor of the translation reaction, by catalyzing a one-codon backward translocation of tRNAs on improperly translocated ribosomes. Binds to mitochondrial ribosomes in a GTP-dependent manner. The chain is Translation factor GUF1, mitochondrial from Uncinocarpus reesii (strain UAMH 1704).